The primary structure comprises 377 residues: TraB domain-containing protein (377 aa).

M1 bears the N-acetylmethionine mark. The disordered stretch occupies residues 1–34 (MEEPEEQPPHEADTEPVVTSGASEAVPRVLPGDP). A Phosphothreonine modification is found at T65.

In Bos taurus (Bovine), this protein is TraB domain-containing protein (TRABD).